Here is a 194-residue protein sequence, read N- to C-terminus: Surfactant protein C (194 aa).

Residues 1–21 are disordered; that stretch reads MDMGSKEVLMESPPDYSTGPR. The propeptide occupies 1 to 23; sequence MDMGSKEVLMESPPDYSTGPRSQ. S-palmitoyl cysteine attachment occurs at residues cysteine 28 and cysteine 29. Positions 59–194 are excised as a propeptide; that stretch reads HMSQKHTEMV…LCGELPLYYI (136 aa). Residues 95-194 enclose the BRICHOS domain; that stretch reads FSIGSTGIVL…LCGELPLYYI (100 aa). A disulfide bridge connects residues cysteine 122 and cysteine 186. The tract at residues 149–170 is disordered; sequence SSTPTSKLGQEEGHSAGSDSDS.

The protein resides in the secreted. The protein localises to the extracellular space. Its subcellular location is the surface film. In terms of biological role, pulmonary surfactant associated proteins promote alveolar stability by lowering the surface tension at the air-liquid interface in the peripheral air spaces. This is Surfactant protein C from Rattus norvegicus (Rat).